We begin with the raw amino-acid sequence, 492 residues long: Probable cytochrome P450 513A3 (492 aa).

A helical membrane pass occupies residues 1–21 (MTSLTLYLIIFSIILYLFVNR). Position 437 (Cys-437) interacts with heme.

Belongs to the cytochrome P450 family. Heme is required as a cofactor.

Its subcellular location is the membrane. The sequence is that of Probable cytochrome P450 513A3 (cyp513A3) from Dictyostelium discoideum (Social amoeba).